The following is a 944-amino-acid chain: Protocadherin gamma-C5 (944 aa).

The signal sequence occupies residues 1–29; sequence MGPKTLPQLAGKWQVLCMLSLCCWGWVSG. 6 Cadherin domains span residues 30–133, 134–242, 243–350, 351–454, 455–564, and 571–677; these read QLRY…SPSF, ATPE…APTF, QSSV…APEV, LLAS…APRF, NQQL…APAV, and WEHS…MPKS. Over 30–693 the chain is Extracellular; the sequence is QLRYSVVEES…PPERSDLTLY (664 aa). N-linked (GlcNAc...) asparagine glycosylation is found at Asn265, Asn443, and Asn547. The chain crosses the membrane as a helical span at residues 694–714; it reads LIVALATVSLLSLVTFTFLSA. At 715–944 the chain is on the cytoplasmic side; the sequence is KCLQGNADGD…KKKSGKKEKK (230 aa). Disordered regions lie at residues 722–747, 812–853, and 914–944; these read DGDG…QSSP, SNTL…WPNN, and ATLT…KEKK. The span at 820-853 shows a compositional bias: polar residues; it reads QQAPPNTDWRFSQAQRPGTSGSQNGDDTGTWPNN. Over residues 934 to 944 the composition is skewed to basic residues; it reads NKKKSGKKEKK.

The protein resides in the cell membrane. Potential calcium-dependent cell-adhesion protein. May be involved in the establishment and maintenance of specific neuronal connections in the brain. This chain is Protocadherin gamma-C5 (PCDHGC5), found in Pan troglodytes (Chimpanzee).